The following is a 547-amino-acid chain: ATP synthase subunit alpha (547 aa).

173-180 (GDRQTGKT) contributes to the ATP binding site.

The protein belongs to the ATPase alpha/beta chains family. As to quaternary structure, F-type ATPases have 2 components, CF(1) - the catalytic core - and CF(0) - the membrane proton channel. CF(1) has five subunits: alpha(3), beta(3), gamma(1), delta(1), epsilon(1). CF(0) has three main subunits: a(1), b(2) and c(9-12). The alpha and beta chains form an alternating ring which encloses part of the gamma chain. CF(1) is attached to CF(0) by a central stalk formed by the gamma and epsilon chains, while a peripheral stalk is formed by the delta and b chains.

The protein resides in the cell membrane. It catalyses the reaction ATP + H2O + 4 H(+)(in) = ADP + phosphate + 5 H(+)(out). Its function is as follows. Produces ATP from ADP in the presence of a proton gradient across the membrane. The alpha chain is a regulatory subunit. This Thermobifida fusca (strain YX) protein is ATP synthase subunit alpha.